Reading from the N-terminus, the 208-residue chain is MKKIFTIAALSLPLFCHLPAMAGGQDDLKVKLMEINTLKANFNQTVTDINQKVIQTGEGVFALSHPNQFYWHLTAPDESLIVADGTDVWIYNPFAEEVSVMDINQAINASPIALLVHSDDATWSQYDVVNNGDCFDISPRDKDSGVSEVEVCFNQQQLTKMVLKDQQGNTSDFTLTNQTPIAENDKDLFKFIVPDDVDIDDQRLKSQN.

Positions 1–22 (MKKIFTIAALSLPLFCHLPAMA) are cleaved as a signal peptide.

Belongs to the LolA family. As to quaternary structure, monomer.

It is found in the periplasm. Participates in the translocation of lipoproteins from the inner membrane to the outer membrane. Only forms a complex with a lipoprotein if the residue after the N-terminal Cys is not an aspartate (The Asp acts as a targeting signal to indicate that the lipoprotein should stay in the inner membrane). In Shewanella pealeana (strain ATCC 700345 / ANG-SQ1), this protein is Outer-membrane lipoprotein carrier protein.